A 250-amino-acid chain; its full sequence is L-cystine transport system ATP-binding protein TcyN (250 aa).

Positions 4 to 244 (IEVKNLVKKF…PEQPRTRQFL (241 aa)) constitute an ABC transporter domain. 36–43 (GPSGSGKT) lines the ATP pocket.

This sequence belongs to the ABC transporter superfamily. As to quaternary structure, the complex is composed of two ATP-binding proteins (TcyN), two transmembrane proteins (TcyL) and a solute-binding protein (TcyJ).

The protein resides in the cell inner membrane. The enzyme catalyses L-cystine(out) + ATP + H2O = L-cystine(in) + ADP + phosphate + H(+). It carries out the reaction D-cystine(out) + ATP + H2O = D-cystine(in) + ADP + phosphate + H(+). Its activity is regulated as follows. The TcyJLN system is inhibited by L-cystine, L-cysteine, DL-2,6-diaminopimelic acid and L-cystathionine, and is stimulated by D-cysteine. Its function is as follows. Part of the ABC transporter complex TcyJLN involved in L-cystine import. This high affinity cystine transporter is involved in resistance to oxidative stress by forming a L-cysteine/L-cystine shuttle system with the EamA transporter, which exports L-cysteine as reducing equivalents to the periplasm to prevent the cells from oxidative stress. Exported L-cysteine can reduce the periplasmic hydrogen peroxide to water, and then generated L-cystine is imported back into the cytoplasm via the TcyJLN complex. Functions at low cystine concentrations. The system can also transport L-cysteine, diaminopimelic acid (DAP), djenkolate, lanthionine, D-cystine, homocystine, and it mediates accumulation of the toxic compounds L-selenaproline (SCA) and L-selenocystine (SeCys). Could also facilitate threonine efflux. Responsible for energy coupling to the transport system. In Escherichia coli (strain K12), this protein is L-cystine transport system ATP-binding protein TcyN.